The chain runs to 287 residues: Shikimate dehydrogenase (NADP(+)) (287 aa).

Residues Ser20 to Ser22 and Thr67 contribute to the shikimate site. The active-site Proton acceptor is the Lys71. Glu84 serves as a coordination point for NADP(+). Asn93 and Asp108 together coordinate shikimate. NADP(+) is bound by residues Gly132–Ala136, Asn156–Arg161, and Met226. Position 228 (Tyr228) interacts with shikimate. Residue Gly250 coordinates NADP(+).

Belongs to the shikimate dehydrogenase family. Homodimer.

The enzyme catalyses shikimate + NADP(+) = 3-dehydroshikimate + NADPH + H(+). Its pathway is metabolic intermediate biosynthesis; chorismate biosynthesis; chorismate from D-erythrose 4-phosphate and phosphoenolpyruvate: step 4/7. Its function is as follows. Involved in the biosynthesis of the chorismate, which leads to the biosynthesis of aromatic amino acids. Catalyzes the reversible NADPH linked reduction of 3-dehydroshikimate (DHSA) to yield shikimate (SA). This is Shikimate dehydrogenase (NADP(+)) from Bordetella pertussis (strain Tohama I / ATCC BAA-589 / NCTC 13251).